The chain runs to 547 residues: Chaperonin GroEL (547 aa).

ATP contacts are provided by residues 30–33 (TLGP), K51, 87–91 (DGTTT), G416, 480–482 (NAA), and D496.

The protein belongs to the chaperonin (HSP60) family. Forms a cylinder of 14 subunits composed of two heptameric rings stacked back-to-back. Interacts with the co-chaperonin GroES.

The protein localises to the cytoplasm. The enzyme catalyses ATP + H2O + a folded polypeptide = ADP + phosphate + an unfolded polypeptide.. Together with its co-chaperonin GroES, plays an essential role in assisting protein folding. The GroEL-GroES system forms a nano-cage that allows encapsulation of the non-native substrate proteins and provides a physical environment optimized to promote and accelerate protein folding. The sequence is that of Chaperonin GroEL from Pseudoalteromonas translucida (strain TAC 125).